Consider the following 611-residue polypeptide: DNA mismatch repair protein MutL (611 aa).

Residues 353 to 387 (NRQAAGGNHFATPAPAAAPRPASTASSSWQRQEPV) are disordered. The segment covering 363 to 380 (ATPAPAAAPRPASTASSS) has biased composition (low complexity).

It belongs to the DNA mismatch repair MutL/HexB family.

In terms of biological role, this protein is involved in the repair of mismatches in DNA. It is required for dam-dependent methyl-directed DNA mismatch repair. May act as a 'molecular matchmaker', a protein that promotes the formation of a stable complex between two or more DNA-binding proteins in an ATP-dependent manner without itself being part of a final effector complex. The chain is DNA mismatch repair protein MutL from Erwinia tasmaniensis (strain DSM 17950 / CFBP 7177 / CIP 109463 / NCPPB 4357 / Et1/99).